The following is a 287-amino-acid chain: Large ribosomal subunit protein uL2 (287 aa).

Disordered stretches follow at residues 25 to 57 and 203 to 287; these read TKTE…RGGG and LSAG…GRES. 2 stretches are compositionally biased toward basic residues: residues 209–220 and 259–287; these read GRNRWKGRRPKV and TRNR…GRES.

The protein belongs to the universal ribosomal protein uL2 family. As to quaternary structure, part of the 50S ribosomal subunit. Forms a bridge to the 30S subunit in the 70S ribosome.

One of the primary rRNA binding proteins. Required for association of the 30S and 50S subunits to form the 70S ribosome, for tRNA binding and peptide bond formation. It has been suggested to have peptidyltransferase activity; this is somewhat controversial. Makes several contacts with the 16S rRNA in the 70S ribosome. In Nostoc punctiforme (strain ATCC 29133 / PCC 73102), this protein is Large ribosomal subunit protein uL2.